We begin with the raw amino-acid sequence, 244 residues long: 1-(5-phosphoribosyl)-5-[(5-phosphoribosylamino)methylideneamino] imidazole-4-carboxamide isomerase (244 aa).

Catalysis depends on D13, which acts as the Proton acceptor. D132 (proton donor) is an active-site residue.

This sequence belongs to the HisA/HisF family.

It localises to the cytoplasm. It catalyses the reaction 1-(5-phospho-beta-D-ribosyl)-5-[(5-phospho-beta-D-ribosylamino)methylideneamino]imidazole-4-carboxamide = 5-[(5-phospho-1-deoxy-D-ribulos-1-ylimino)methylamino]-1-(5-phospho-beta-D-ribosyl)imidazole-4-carboxamide. It participates in amino-acid biosynthesis; L-histidine biosynthesis; L-histidine from 5-phospho-alpha-D-ribose 1-diphosphate: step 4/9. The sequence is that of 1-(5-phosphoribosyl)-5-[(5-phosphoribosylamino)methylideneamino] imidazole-4-carboxamide isomerase from Renibacterium salmoninarum (strain ATCC 33209 / DSM 20767 / JCM 11484 / NBRC 15589 / NCIMB 2235).